The sequence spans 271 residues: Proteasome inhibitor PI31 subunit (271 aa).

Ala-2 bears the N-acetylalanine mark. Residues 2 to 150 form an important for homodimerization and interaction with FBXO7 region; sequence AGLEVLFASA…PIHEQWEKAR (149 aa). Residues Ser-153 and Ser-189 each carry the phosphoserine modification. The residue at position 205 (Arg-205) is an Omega-N-methylarginine. Arg-219 is subject to Asymmetric dimethylarginine. The interval 226 to 271 is disordered; it reads SGLPNRLPPGAVPPGARFDPFGPIGTSPSGPNPDHLPPPGYDDMYL. At Arg-231 the chain carries Omega-N-methylarginine. Residue Ser-252 is modified to Phosphoserine. Pro residues predominate over residues 255–265; it reads GPNPDHLPPPG.

It belongs to the proteasome inhibitor PI31 family. In terms of assembly, monomer and homodimer. Interacts with FBXO7.

Its subcellular location is the cytoplasm. The protein localises to the endoplasmic reticulum. In terms of biological role, plays an important role in control of proteasome function. Inhibits the hydrolysis of protein and peptide substrates by the 20S proteasome. Also inhibits the activation of the proteasome by the proteasome regulatory proteins PA700 and PA28. The sequence is that of Proteasome inhibitor PI31 subunit (Psmf1) from Mus musculus (Mouse).